A 478-amino-acid chain; its full sequence is Lipoprotein lipase (478 aa).

An N-terminal signal peptide occupies residues 1–28; it reads MESKALLLLALSVCLQSLTVSRGGLVAA. The tract at residues 35–56 is interaction with GPIHBP1; the sequence is KDFRDIESKFALRTPEDTAEDT. A disulfide bridge links C57 with C70. N73 carries N-linked (GlcNAc...) asparagine glycosylation. The residue at position 124 (Y124) is a 3'-nitrotyrosine. The active-site Nucleophile is the S162. D186 (charge relay system) is an active-site residue. 3'-nitrotyrosine is present on Y194. 4 residues coordinate Ca(2+): A197, R200, S202, and D205. Cysteines 246 and 269 form a disulfide. Residues 246–269 form an essential for determining substrate specificity region; it reads CNIGEALRVIAERGLGDVDQLVKC. The Charge relay system role is filled by H271. The N-linked (GlcNAc...) asparagine glycan is linked to N287. 2 disulfide bridges follow: C294–C313 and C305–C308. One can recognise a PLAT domain in the interval 344–467; that stretch reads FHYQVKIHFS…KGKSPVIFVK (124 aa). Y346 is modified (3'-nitrotyrosine). A glycan (N-linked (GlcNAc...) asparagine) is linked at N389. The interval 420-424 is important for interaction with lipoprotein particles; sequence WSNWW. The tract at residues 433–437 is important for heparin binding; it reads KIRVK. Residues 446–470 are interaction with GPIHBP1; the sequence is IFCSREKMSYLQKGKSPVIFVKCHD. A disulfide bond links C448 and C468.

The protein belongs to the AB hydrolase superfamily. Lipase family. Homodimer. Interacts with GPIHBP1 with 1:1 stoichiometry. Interacts with APOC2; the interaction activates LPL activity in the presence of lipids. Interaction with heparan sulfate proteoglycans is required to protect LPL against loss of activity. Associates with lipoprotein particles in blood plasma. Interacts with LMF1 and SEL1L; interaction with SEL1L is required to prevent aggregation of newly synthesized LPL in the endoplasmic reticulum (ER), and for normal export of LPL from the ER to the extracellular space. Interacts with SORL1; SORL1 acts as a sorting receptor, promoting LPL localization to endosomes and later to lysosomes, leading to degradation of newly synthesized LPL. Tyrosine nitration after lipopolysaccharide (LPS) challenge down-regulates the lipase activity. Detected in milk (at protein level).

It is found in the cell membrane. The protein resides in the secreted. It localises to the extracellular space. Its subcellular location is the extracellular matrix. It catalyses the reaction a triacylglycerol + H2O = a diacylglycerol + a fatty acid + H(+). It carries out the reaction a 1,2-diacyl-sn-glycero-3-phosphocholine + H2O = a 2-acyl-sn-glycero-3-phosphocholine + a fatty acid + H(+). The enzyme catalyses 1,2,3-tri-(9Z-octadecenoyl)-glycerol + H2O = di-(9Z)-octadecenoylglycerol + (9Z)-octadecenoate + H(+). The catalysed reaction is 1,2-di-(9Z-octadecenoyl)-sn-glycero-3-phosphocholine + H2O = (9Z-octadecenoyl)-sn-glycero-3-phosphocholine + (9Z)-octadecenoate + H(+). It catalyses the reaction 1,2,3-tributanoylglycerol + H2O = dibutanoylglycerol + butanoate + H(+). It carries out the reaction 1,2-dihexadecanoyl-sn-glycero-3-phosphocholine + H2O = hexadecanoyl-sn-glycero-3-phosphocholine + hexadecanoate + H(+). With respect to regulation, the apolipoprotein APOC2 acts as a coactivator of LPL activity. Ca(2+) binding promotes protein stability and formation of the active homodimer. Interaction with GPIHBP1 protects LPL against inactivation by ANGPTL4. Its function is as follows. Key enzyme in triglyceride metabolism. Catalyzes the hydrolysis of triglycerides from circulating chylomicrons and very low density lipoproteins (VLDL), and thereby plays an important role in lipid clearance from the blood stream, lipid utilization and storage. Although it has both phospholipase and triglyceride lipase activities it is primarily a triglyceride lipase with low but detectable phospholipase activity. Mediates margination of triglyceride-rich lipoprotein particles in capillaries. Recruited to its site of action on the luminal surface of vascular endothelium by binding to GPIHBP1 and cell surface heparan sulfate proteoglycans. The sequence is that of Lipoprotein lipase (LPL) from Bos taurus (Bovine).